We begin with the raw amino-acid sequence, 475 residues long: Aspartyl/glutamyl-tRNA(Asn/Gln) amidotransferase subunit B (475 aa).

This sequence belongs to the GatB/GatE family. GatB subfamily. Heterotrimer of A, B and C subunits.

It catalyses the reaction L-glutamyl-tRNA(Gln) + L-glutamine + ATP + H2O = L-glutaminyl-tRNA(Gln) + L-glutamate + ADP + phosphate + H(+). The enzyme catalyses L-aspartyl-tRNA(Asn) + L-glutamine + ATP + H2O = L-asparaginyl-tRNA(Asn) + L-glutamate + ADP + phosphate + 2 H(+). Its function is as follows. Allows the formation of correctly charged Asn-tRNA(Asn) or Gln-tRNA(Gln) through the transamidation of misacylated Asp-tRNA(Asn) or Glu-tRNA(Gln) in organisms which lack either or both of asparaginyl-tRNA or glutaminyl-tRNA synthetases. The reaction takes place in the presence of glutamine and ATP through an activated phospho-Asp-tRNA(Asn) or phospho-Glu-tRNA(Gln). The polypeptide is Aspartyl/glutamyl-tRNA(Asn/Gln) amidotransferase subunit B (Staphylococcus aureus (strain COL)).